The following is a 60-amino-acid chain: UPF0434 protein Dtpsy_1553 (60 aa).

This sequence belongs to the UPF0434 family.

The polypeptide is UPF0434 protein Dtpsy_1553 (Acidovorax ebreus (strain TPSY) (Diaphorobacter sp. (strain TPSY))).